Consider the following 448-residue polypeptide: Nucleoprotein (448 aa).

The disordered stretch occupies residues 1-55; the sequence is MSFTPGKQSSSRASSGNRSGNGILKWADQSDQSRNVQTRGRRAQPKQTATSQQPS. A compositionally biased stretch (low complexity) spans 9-22; it reads SSSRASSGNRSGNG. Polar residues-rich tracts occupy residues 29–38 and 45–55; these read QSDQSRNVQT and PKQTATSQQPS. Residues 52 to 194 form an RNA-binding region; the sequence is QQPSGGNVVP…GYYIEGSGRS (143 aa). In terms of domain architecture, CoV N NTD spans 61–190; it reads PYYSWFSGIT…VLPQGYYIEG (130 aa). Residues Arg-106, Arg-122, and Arg-164 each contribute to the RNA site. 3 disordered regions span residues 157 to 231, 266 to 297, and 385 to 448; these read TPAD…VTPD, ILNKPRQKRSPNKQCTVQQCFGKRGPNQNFGG, and GMMN…TSEI. Residue Ser-167 is modified to Phosphoserine; by host. At Thr-174 the chain carries Phosphothreonine; by host. Ser-191 is modified (phosphoserine; by host). A compositionally biased stretch (low complexity) spans 193–223; the sequence is RSAPNSRSTSRASSRASSAGSRSRANSGNRT. The CoV N CTD domain maps to 259–384; that stretch reads AKEIRQKILN…ENLNAYQQQD (126 aa). Residues 266-276 show a composition bias toward basic residues; sequence ILNKPRQKRSP. The tract at residues 266–384 is dimerization; it reads ILNKPRQKRS…ENLNAYQQQD (119 aa). A Phosphoserine; by host modification is found at Ser-390. Positions 399-409 are enriched in polar residues; the sequence is QKNGQGENDNI. Positions 422–439 are enriched in basic and acidic residues; the sequence is KSRELTAEDISLLKKMDE. Ser-423 bears the Phosphoserine; by host mark. Thr-427 is modified (phosphothreonine; by host).

It belongs to the betacoronavirus nucleocapsid protein family. As to quaternary structure, homooligomer. Both monomeric and oligomeric forms interact with RNA. Interacts with protein M. Interacts with NSP3; this interaction serves to tether the genome to the newly translated replicase-transcriptase complex at a very early stage of infection. ADP-ribosylated. The ADP-ribosylation is retained in the virion during infection. In terms of processing, phosphorylated on serine and threonine residues.

The protein resides in the virion. It localises to the host endoplasmic reticulum-Golgi intermediate compartment. The protein localises to the host Golgi apparatus. Packages the positive strand viral genome RNA into a helical ribonucleocapsid (RNP) and plays a fundamental role during virion assembly through its interactions with the viral genome and membrane protein M. Plays an important role in enhancing the efficiency of subgenomic viral RNA transcription as well as viral replication. This is Nucleoprotein from Bovine coronavirus (strain OK-0514) (BCoV).